A 385-amino-acid chain; its full sequence is Probable caffeine synthase MTL1 (385 aa).

The S-adenosyl-L-homocysteine site is built by Y18, C62, N67, D101, L102, S140, and F141. Residues Y158, Q161, and F162 each contribute to the caffeine site. Residue N179 participates in Mg(2+) binding. Position 238 (T238) interacts with caffeine. Mg(2+)-binding residues include D261, F263, and N264. Y369 contacts caffeine.

It belongs to the methyltransferase superfamily. Type-7 methyltransferase family. Requires Mg(2+) as cofactor.

It functions in the pathway alkaloid biosynthesis. Its function is as follows. May be involved in the biosynthesis of caffeine. The sequence is that of Probable caffeine synthase MTL1 from Coffea canephora (Robusta coffee).